The primary structure comprises 660 residues: Bifunctional polymyxin resistance protein ArnA (660 aa).

The segment at 1–304 (MKAVVFAYHN…EMYLVEGMRF (304 aa)) is formyltransferase ArnAFT. The Proton donor; for formyltransferase activity role is filled by His-104. Residues Arg-114 and 136-140 (TVKPD) contribute to the (6R)-10-formyltetrahydrofolate site. Residues 316–660 (RRQKVLIMGA…FLKTAVEETK (345 aa)) form a dehydrogenase ArnADH region. Residues Asp-349 and 370–371 (DI) each bind NAD(+). Residues Ala-395, Tyr-400, and 434 to 435 (TS) each bind UDP-alpha-D-glucuronate. The active-site Proton acceptor; for decarboxylase activity is the Glu-436. Residues Arg-462, Asn-494, 528-537 (KLIDGGEQKR), and Tyr-615 each bind UDP-alpha-D-glucuronate. The Proton donor; for decarboxylase activity role is filled by Arg-621.

This sequence in the N-terminal section; belongs to the Fmt family. UDP-L-Ara4N formyltransferase subfamily. In the C-terminal section; belongs to the NAD(P)-dependent epimerase/dehydratase family. UDP-glucuronic acid decarboxylase subfamily. Homohexamer, formed by a dimer of trimers.

The enzyme catalyses UDP-alpha-D-glucuronate + NAD(+) = UDP-beta-L-threo-pentopyranos-4-ulose + CO2 + NADH. It catalyses the reaction UDP-4-amino-4-deoxy-beta-L-arabinose + (6R)-10-formyltetrahydrofolate = UDP-4-deoxy-4-formamido-beta-L-arabinose + (6S)-5,6,7,8-tetrahydrofolate + H(+). The protein operates within nucleotide-sugar biosynthesis; UDP-4-deoxy-4-formamido-beta-L-arabinose biosynthesis; UDP-4-deoxy-4-formamido-beta-L-arabinose from UDP-alpha-D-glucuronate: step 1/3. It participates in nucleotide-sugar biosynthesis; UDP-4-deoxy-4-formamido-beta-L-arabinose biosynthesis; UDP-4-deoxy-4-formamido-beta-L-arabinose from UDP-alpha-D-glucuronate: step 3/3. It functions in the pathway bacterial outer membrane biogenesis; lipopolysaccharide biosynthesis. Bifunctional enzyme that catalyzes the oxidative decarboxylation of UDP-glucuronic acid (UDP-GlcUA) to UDP-4-keto-arabinose (UDP-Ara4O) and the addition of a formyl group to UDP-4-amino-4-deoxy-L-arabinose (UDP-L-Ara4N) to form UDP-L-4-formamido-arabinose (UDP-L-Ara4FN). The modified arabinose is attached to lipid A and is required for resistance to polymyxin and cationic antimicrobial peptides. This chain is Bifunctional polymyxin resistance protein ArnA, found in Shewanella sediminis (strain HAW-EB3).